Consider the following 2293-residue polypeptide: Protein Ycf2 (2293 aa).

1642–1649 lines the ATP pocket; sequence GSIGTGRS.

This sequence belongs to the Ycf2 family.

The protein localises to the plastid. Its subcellular location is the chloroplast stroma. Probable ATPase of unknown function. Its presence in a non-photosynthetic plant (Epifagus virginiana) and experiments in tobacco indicate that it has an essential function which is probably not related to photosynthesis. This is Protein Ycf2 from Platanus occidentalis (Sycamore).